The following is a 259-amino-acid chain: 5'-nucleotidase SurE (259 aa).

Residues aspartate 15, aspartate 16, serine 46, and asparagine 102 each coordinate a divalent metal cation.

The protein belongs to the SurE nucleotidase family. It depends on a divalent metal cation as a cofactor.

The protein resides in the cytoplasm. The catalysed reaction is a ribonucleoside 5'-phosphate + H2O = a ribonucleoside + phosphate. Functionally, nucleotidase that shows phosphatase activity on nucleoside 5'-monophosphates. This Chlorobium luteolum (strain DSM 273 / BCRC 81028 / 2530) (Pelodictyon luteolum) protein is 5'-nucleotidase SurE.